We begin with the raw amino-acid sequence, 331 residues long: Glyceraldehyde-3-phosphate dehydrogenase 3 (331 aa).

NAD(+) contacts are provided by residues 11-12 (RI), aspartate 33, and glutamate 77. Serine 148 carries the post-translational modification Phosphoserine. 148 to 150 (SCT) serves as a coordination point for D-glyceraldehyde 3-phosphate. Cysteine 149 serves as the catalytic Nucleophile. Phosphoserine is present on serine 177. D-glyceraldehyde 3-phosphate is bound at residue threonine 179. The residue at position 200 (serine 200) is a Phosphoserine. Residues 208–209 (TG) and arginine 231 contribute to the D-glyceraldehyde 3-phosphate site. Asparagine 313 contributes to the NAD(+) binding site.

The protein belongs to the glyceraldehyde-3-phosphate dehydrogenase family. In terms of assembly, homotetramer.

The protein resides in the cytoplasm. The catalysed reaction is D-glyceraldehyde 3-phosphate + phosphate + NAD(+) = (2R)-3-phospho-glyceroyl phosphate + NADH + H(+). Its pathway is carbohydrate degradation; glycolysis; pyruvate from D-glyceraldehyde 3-phosphate: step 1/5. In Kluyveromyces marxianus (Yeast), this protein is Glyceraldehyde-3-phosphate dehydrogenase 3.